Consider the following 329-residue polypeptide: Biotin synthase (329 aa).

Residues 38–262 enclose the Radical SAM core domain; sequence NTIQVSTLLS…IMPYSYIRLS (225 aa). [4Fe-4S] cluster is bound by residues Cys53, Cys57, and Cys60. [2Fe-2S] cluster is bound by residues Cys97, Cys128, Cys188, and Arg260.

The protein belongs to the radical SAM superfamily. Biotin synthase family. In terms of assembly, homodimer. [4Fe-4S] cluster is required as a cofactor. [2Fe-2S] cluster serves as cofactor.

It carries out the reaction (4R,5S)-dethiobiotin + (sulfur carrier)-SH + 2 reduced [2Fe-2S]-[ferredoxin] + 2 S-adenosyl-L-methionine = (sulfur carrier)-H + biotin + 2 5'-deoxyadenosine + 2 L-methionine + 2 oxidized [2Fe-2S]-[ferredoxin]. It functions in the pathway cofactor biosynthesis; biotin biosynthesis; biotin from 7,8-diaminononanoate: step 2/2. Its function is as follows. Catalyzes the conversion of dethiobiotin (DTB) to biotin by the insertion of a sulfur atom into dethiobiotin via a radical-based mechanism. The chain is Biotin synthase from Acinetobacter baylyi (strain ATCC 33305 / BD413 / ADP1).